A 204-amino-acid polypeptide reads, in one-letter code: Recombination protein RecR (204 aa).

A C4-type zinc finger spans residues 58–75; it reads CTICQNITDVGTDPCAIC. Residues 83–181 form the Toprim domain; that stretch reads TVICVVESPV…AVTKIARGIP (99 aa).

This sequence belongs to the RecR family.

Functionally, may play a role in DNA repair. It seems to be involved in an RecBC-independent recombinational process of DNA repair. It may act with RecF and RecO. The chain is Recombination protein RecR from Chlorobium chlorochromatii (strain CaD3).